A 91-amino-acid polypeptide reads, in one-letter code: UPF0358 protein SAS1047 (91 aa).

The protein belongs to the UPF0358 family.

This is UPF0358 protein SAS1047 from Staphylococcus aureus (strain MSSA476).